Consider the following 173-residue polypeptide: Ferritin, lower subunit (173 aa).

A Ferritin-like diiron domain is found at 7–156; it reads QNFHQDCEAG…DHITSLKKLW (150 aa). 2 residues coordinate Fe cation: Glu-59 and His-62.

It belongs to the ferritin family. In terms of assembly, oligomer of 24 subunits. The functional molecule is roughly spherical and contains a central cavity into which the polymeric mineral iron core is deposited.

Its function is as follows. Stores iron in a soluble, non-toxic, readily available form. Important for iron homeostasis. Iron is taken up in the ferrous form and deposited as ferric hydroxides after oxidation. This Aquarana catesbeiana (American bullfrog) protein is Ferritin, lower subunit.